The following is a 116-amino-acid chain: NADH-ubiquinone oxidoreductase chain 3 (116 aa).

Helical transmembrane passes span 4-24, 56-76, and 88-108; these read IIIIVLSILAVTAALVFAAHF, FFLVAILFLLFDLEIALLFPF, and VLYIATLFLAILLIGLIFEWT.

It belongs to the complex I subunit 3 family.

It localises to the mitochondrion membrane. The enzyme catalyses a ubiquinone + NADH + 5 H(+)(in) = a ubiquinol + NAD(+) + 4 H(+)(out). Its function is as follows. Core subunit of the mitochondrial membrane respiratory chain NADH dehydrogenase (Complex I) that is believed to belong to the minimal assembly required for catalysis. Complex I functions in the transfer of electrons from NADH to the respiratory chain. The immediate electron acceptor for the enzyme is believed to be ubiquinone. This chain is NADH-ubiquinone oxidoreductase chain 3 (ND3), found in Pisaster ochraceus (Ochre sea star).